The primary structure comprises 127 residues: Anti-adapter protein IraD (127 aa).

This sequence belongs to the GpW/Gp25 family. IraD subfamily. In terms of assembly, interacts with RssB.

The protein localises to the cytoplasm. Inhibits RpoS proteolysis by regulating RssB activity, thereby increasing the stability of the sigma stress factor RpoS during oxidative stress. Its effect on RpoS stability is due to its interaction with RssB, which probably blocks the interaction of RssB with RpoS, and the consequent delivery of the RssB-RpoS complex to the ClpXP protein degradation pathway. The sequence is that of Anti-adapter protein IraD from Escherichia coli O127:H6 (strain E2348/69 / EPEC).